The following is a 639-amino-acid chain: Elongation factor 4 (639 aa).

Residues 39 to 221 (TMIRNFCIIA…EIVRRVPAPV (183 aa)) enclose the tr-type G domain. GTP contacts are provided by residues 51–56 (DHGKST) and 168–171 (NKID).

It belongs to the TRAFAC class translation factor GTPase superfamily. Classic translation factor GTPase family. LepA subfamily.

Its subcellular location is the cell membrane. The enzyme catalyses GTP + H2O = GDP + phosphate + H(+). In terms of biological role, required for accurate and efficient protein synthesis under certain stress conditions. May act as a fidelity factor of the translation reaction, by catalyzing a one-codon backward translocation of tRNAs on improperly translocated ribosomes. Back-translocation proceeds from a post-translocation (POST) complex to a pre-translocation (PRE) complex, thus giving elongation factor G a second chance to translocate the tRNAs correctly. Binds to ribosomes in a GTP-dependent manner. The polypeptide is Elongation factor 4 (Frankia casuarinae (strain DSM 45818 / CECT 9043 / HFP020203 / CcI3)).